The sequence spans 238 residues: Uridylate kinase (238 aa).

Residue 12 to 15 (KLSG) participates in ATP binding. The involved in allosteric activation by GTP stretch occupies residues 20 to 25 (GDEGFG). Residue G54 coordinates UMP. The ATP site is built by G55 and R59. UMP is bound by residues D74 and 135-142 (TGSPFFTT). ATP-binding residues include T162, Y168, and D171.

It belongs to the UMP kinase family. In terms of assembly, homohexamer.

The protein resides in the cytoplasm. The enzyme catalyses UMP + ATP = UDP + ADP. It participates in pyrimidine metabolism; CTP biosynthesis via de novo pathway; UDP from UMP (UMPK route): step 1/1. Allosterically activated by GTP. Inhibited by UTP. In terms of biological role, catalyzes the reversible phosphorylation of UMP to UDP. This chain is Uridylate kinase, found in Histophilus somni (strain 129Pt) (Haemophilus somnus).